The chain runs to 782 residues: MSGVQSKAARLQKERKEKLSADRERKTATSLCLKHSEVPASMMKQFNALMEMQEVMFAEMRETYKNDIKEMLLKRTAPWVKHLEERIGQQEGDAISERPKPGEKVEELSSGTDEDTENLTVRSKKGKQDKAKPLNSSHVLKSSLERGGEALRGEHGRCGESSSLVDWKNANEKPAREASCQSEENRLKAPKESPPEGGAGATLRLAADFSAATLDVGRQWSQVFRLLKEKELEPELQCSVKLAFKCDGEANVFSDLHSLRQFTSRKPFLRELLKDVFPQNEGGRRNELRERLGKTLGDTKHEARRIASDSLSFLFIKEVEVASPEVKTYKEETLDRKNKGTLKKQEGEEEEISETQGEETSEGETSELGEEEGSESEEEEESSESEEEEESSESAEEIGFISLVVDSESEEEVNRKTASQTKKKETFHGLKELAFSYLVWDSKKKKLVRCQEGGAAAASTQRIGMPCLTLYLTSPSESLGAGSDGPKSHSCTKLSALSQVTPLLTNIEKGRYKVPQTEEPTAKEADLILETEENFKRGVISVIRQMQREVDKIKNIYVSDVLNMKSSLDDLNSLACTIEARVSEQEDAVEGLTKDTMQLAREIVDKERLREREDRFRSSNIRVIGIPEKENRENGAVDIIKEVIEENFAELEDQSLEIVSAHRVPNSVDEHRLTPRHILVKFGSASDKQRVLKASRAKQEITYRGSKIRLTADLSPGTIDARSQWCGIIKILQDEGFQPRILYPAKLAFDFKGKTKIFFDIEEFKKFISDIPYLKDLLNNIH.

Disordered regions lie at residues methionine 1–serine 30, glutamine 90–glycine 200, and asparagine 338–glutamate 397. 2 stretches are compositionally biased toward basic and acidic residues: residues leucine 11–threonine 27 and isoleucine 95–glutamate 107. Serine 136 is subject to Phosphoserine. Basic and acidic residues-rich tracts occupy residues serine 143–cysteine 158 and glutamate 183–proline 194. The span at glycine 347–glutamate 396 shows a compositional bias: acidic residues. Residues serine 407, serine 409, serine 442, serine 478, serine 490, serine 559, and serine 567 each carry the phosphoserine modification.

Belongs to the transposase 22 family.

The sequence is that of LINE-1 type transposase domain-containing protein 1 (L1td1) from Mus musculus (Mouse).